Here is a 251-residue protein sequence, read N- to C-terminus: Ubiquinone/menaquinone biosynthesis C-methyltransferase UbiE (251 aa).

Residues threonine 74, aspartate 95, and 123–124 (NA) contribute to the S-adenosyl-L-methionine site.

Belongs to the class I-like SAM-binding methyltransferase superfamily. MenG/UbiE family.

It carries out the reaction a 2-demethylmenaquinol + S-adenosyl-L-methionine = a menaquinol + S-adenosyl-L-homocysteine + H(+). The enzyme catalyses a 2-methoxy-6-(all-trans-polyprenyl)benzene-1,4-diol + S-adenosyl-L-methionine = a 5-methoxy-2-methyl-3-(all-trans-polyprenyl)benzene-1,4-diol + S-adenosyl-L-homocysteine + H(+). It participates in quinol/quinone metabolism; menaquinone biosynthesis; menaquinol from 1,4-dihydroxy-2-naphthoate: step 2/2. Its pathway is cofactor biosynthesis; ubiquinone biosynthesis. In terms of biological role, methyltransferase required for the conversion of demethylmenaquinol (DMKH2) to menaquinol (MKH2) and the conversion of 2-polyprenyl-6-methoxy-1,4-benzoquinol (DDMQH2) to 2-polyprenyl-3-methyl-6-methoxy-1,4-benzoquinol (DMQH2). The chain is Ubiquinone/menaquinone biosynthesis C-methyltransferase UbiE from Shewanella pealeana (strain ATCC 700345 / ANG-SQ1).